A 344-amino-acid chain; its full sequence is UDP-3-O-acylglucosamine N-acyltransferase (344 aa).

Histidine 250 serves as the catalytic Proton acceptor.

It belongs to the transferase hexapeptide repeat family. LpxD subfamily. As to quaternary structure, homotrimer.

It carries out the reaction a UDP-3-O-[(3R)-3-hydroxyacyl]-alpha-D-glucosamine + a (3R)-hydroxyacyl-[ACP] = a UDP-2-N,3-O-bis[(3R)-3-hydroxyacyl]-alpha-D-glucosamine + holo-[ACP] + H(+). Its pathway is bacterial outer membrane biogenesis; LPS lipid A biosynthesis. Functionally, catalyzes the N-acylation of UDP-3-O-acylglucosamine using 3-hydroxyacyl-ACP as the acyl donor. Is involved in the biosynthesis of lipid A, a phosphorylated glycolipid that anchors the lipopolysaccharide to the outer membrane of the cell. This is UDP-3-O-acylglucosamine N-acyltransferase from Maricaulis maris (strain MCS10) (Caulobacter maris).